The primary structure comprises 1093 residues: Electroneutral sodium bicarbonate exchanger 1 (1093 aa).

Disordered stretches follow at residues 1 to 25 and 55 to 95; these read MPAA…AVVD and PLGR…HDTP. The Extracellular segment spans residues 1–478; sequence MPAAGSNEPD…DYRDALSLQC (478 aa). Residues 59–77 show a composition bias toward basic residues; sequence QSHRHHRTHGQKHRRRGRG. Zn(2+) is bound by residues Phe167 and Leu169. The VTVLP; mediates dimerization motif lies at 340 to 344; it reads LFILL. A helical transmembrane segment spans residues 479–499; that stretch reads LASFLFLYCACMSPVITFGGL. The Cytoplasmic portion of the chain corresponds to 500–523; sequence LGEATEGRISAIESLFGASMTGIA. The helical transmembrane segment at 524 to 544 threads the bilayer; the sequence is YSLFAGQALTILGSTGPVLVF. Over 545-565 the chain is Extracellular; the sequence is EKILFKFCKDYALSYLSLRAC. The helical transmembrane segment at 566–586 threads the bilayer; sequence IGLWTAFLCIVLVATDASSLV. Over 587-595 the chain is Cytoplasmic; the sequence is CYITRFTEE. A helical membrane pass occupies residues 596-616; sequence AFASLICIIFIYEAIEKLIHL. At 617–687 the chain is on the extracellular side; the sequence is AETYPIHMHS…EFMGSACGHH (71 aa). Disulfide bonds link Cys636/Cys684 and Cys638/Cys672. An N-linked (GlcNAc) asparagine glycan is attached at Asn646. Residues 688–708 traverse the membrane as a helical segment; it reads GPYTPDVLFWSCILFFTTFIL. Residues 709–731 lie on the Cytoplasmic side of the membrane; sequence SSTLKTFKTSRYFPTRVRSMVSD. The chain crosses the membrane as a helical span at residues 732–752; the sequence is FAVFLTIFTMVIIDFLIGVPS. Residues 753-778 lie on the Extracellular side of the membrane; sequence PKLQVPSVFKPTRDDRGWIINPIGPN. A helical membrane pass occupies residues 779–799; that stretch reads PWWTVIAAIIPALLCTILIFM. Over 800-824 the chain is Cytoplasmic; it reads DQQITAVIINRKEHKLKKGCGYHLD. A helical membrane pass occupies residues 825–845; it reads LLMVAIMLGVCSIMGLPWFVA. Residues 846–881 are Extracellular-facing; that stretch reads ATVLSITHVNSLKLESECSAPGEQPKFLGIREQRVT. Residues 882-902 traverse the membrane as a helical segment; the sequence is GLMIFVLMGCSVFMTAILKFI. The Cytoplasmic portion of the chain corresponds to 903–904; sequence PM. The helical transmembrane segment at 905 to 925 threads the bilayer; it reads PVLYGVFLYMGVSSLQGIQFF. Residues 926-962 lie on the Extracellular side of the membrane; it reads DRLKLFGMPAKHQPDFIYLRHVPLRKVHLFTLIQLTC. The chain crosses the membrane as a helical span at residues 963–983; sequence LVLLWVIKASPAAIVFPMMVL. Residues 984-1093 lie on the Cytoplasmic side of the membrane; sequence ALVFVRKVMD…GNAKEKSLFN (110 aa). Residues 1010–1036 adopt a coiled-coil conformation; the sequence is ESKKKKLDDAKKKAKEEEEAEKMLEIG.

Belongs to the anion exchanger (TC 2.A.31) family. Homodimer. In terms of tissue distribution, expressed in the pyramidal cells of the hippocampus (at protein level). Highly expressed in all major regions of the brain, spinal column and in testis, and moderate levels in trachea, thyroid and medulla region of kidney. Low expression levels observed in pancreas and kidney cortex. As to expression, expressed in the brain. Expressed in the brain, heart and kidney.

The protein resides in the apical cell membrane. The protein localises to the basolateral cell membrane. Its subcellular location is the cytoplasmic vesicle. It is found in the secretory vesicle. It localises to the synaptic vesicle membrane. The protein resides in the cell membrane. It catalyses the reaction 2 hydrogencarbonate(out) + chloride(in) + Na(+)(out) = 2 hydrogencarbonate(in) + chloride(out) + Na(+)(in). Activity is inhibited by 4,4'-Di-isothiocyanatostilbene-2,2'-disulfonic acid (DIDS - an inhibitor of several anion channels and transporters). With respect to regulation, activity is inhibited by 4,4'-Di-isothiocyanatostilbene-2,2'-disulfonic acid (DIDS - an inhibitor of several anion channels and transporters). Zinc-binding negatively regulates its activity. In terms of biological role, mediates electroneutral sodium- and carbonate-dependent chloride-HCO3(-) exchange with a Na(+):HCO3(-) stoichiometry of 2:1. Plays a major role in pH regulation in neurons. Mediates sodium reabsorption in the renal cortical collecting ducts. This chain is Electroneutral sodium bicarbonate exchanger 1, found in Homo sapiens (Human).